The following is a 247-amino-acid chain: Flavin-dependent thymidylate synthase (247 aa).

A ThyX domain is found at 1 to 237; sequence MRVRLLEATE…PHTFEYYDAE (237 aa). DUMP is bound by residues 85–88, 98–100, and Arg176; these read QLTR and SMR. FAD is bound at residue 88 to 90; that stretch reads RHR. Positions 88–98 match the ThyX motif motif; it reads RHRHASFDVQS. Residues 192 to 194 and His198 contribute to the FAD site; that span reads NPR. DUMP is bound at residue Arg203. Arg203 (involved in ionization of N3 of dUMP, leading to its activation) is an active-site residue.

This sequence belongs to the thymidylate synthase ThyX family. Homotetramer. The cofactor is FAD.

It carries out the reaction dUMP + (6R)-5,10-methylene-5,6,7,8-tetrahydrofolate + NADPH + H(+) = dTMP + (6S)-5,6,7,8-tetrahydrofolate + NADP(+). Its pathway is pyrimidine metabolism; dTTP biosynthesis. Catalyzes the reductive methylation of 2'-deoxyuridine-5'-monophosphate (dUMP) to 2'-deoxythymidine-5'-monophosphate (dTMP) while utilizing 5,10-methylenetetrahydrofolate (mTHF) as the methyl donor, and NADPH and FADH(2) as the reductant. The protein is Flavin-dependent thymidylate synthase of Halobacterium salinarum (strain ATCC 700922 / JCM 11081 / NRC-1) (Halobacterium halobium).